The sequence spans 149 residues: MILIVEDDAHKSSQILELVNLVIGSGAEVKLVDNVMDAVRFLFEMTPEKIILDMSLPSHKALPGQGTPVPLPTGGIEVLLELRMKSHMGLPILILTQYPEIEIEDEPVPVAESALTFQEEYGFTDIEACYYDHNDSKPWKQKTMEFLKS.

In terms of domain architecture, Response regulatory spans 1 to 134 (MILIVEDDAH…DIEACYYDHN (134 aa)). At aspartate 53 the chain carries 4-aspartylphosphate.

Probably phosphorylated by DtcA.

In terms of biological role, possible phosphate scavenger member of the two-component regulatory system Detocs that confers resistance to bacteriophage. When the system (DtcA-DtcB-DtcC) is expressed in a susceptible E.coli (strain MG1655) it confers resistance to bacteriophages T2, T4, T5, T6 and SECphi27. Detocs inhibits T5 infection leading to growth arrest but not complete cell lysis, during SECphi27 infection leads to cell lysis. Overexpression of this protein along with the intact Detocs locus cancels T5 immunity; when the phosphate-receiving Asp-53 is mutated to Ala in this protein, immunity is restored. DtcA probably autophosphorylates upon sensing viral infection, and subsequently transfers the phosphate signal to DtcC which activates it, leading to an antiviral defense; DtcB (this subunit) may scavenge phosphorylation signals from accidental activation of DtcA. This is Detocs response regulatory protein DtcB from Vibrio alginolyticus.